The sequence spans 151 residues: Ribosome maturation factor RimP (151 aa).

This sequence belongs to the RimP family.

The protein resides in the cytoplasm. In terms of biological role, required for maturation of 30S ribosomal subunits. In Shewanella denitrificans (strain OS217 / ATCC BAA-1090 / DSM 15013), this protein is Ribosome maturation factor RimP.